Here is a 360-residue protein sequence, read N- to C-terminus: S-adenosylmethionine:tRNA ribosyltransferase-isomerase (360 aa).

The protein belongs to the QueA family. In terms of assembly, monomer.

It is found in the cytoplasm. It catalyses the reaction 7-aminomethyl-7-carbaguanosine(34) in tRNA + S-adenosyl-L-methionine = epoxyqueuosine(34) in tRNA + adenine + L-methionine + 2 H(+). The protein operates within tRNA modification; tRNA-queuosine biosynthesis. In terms of biological role, transfers and isomerizes the ribose moiety from AdoMet to the 7-aminomethyl group of 7-deazaguanine (preQ1-tRNA) to give epoxyqueuosine (oQ-tRNA). The chain is S-adenosylmethionine:tRNA ribosyltransferase-isomerase from Sinorhizobium medicae (strain WSM419) (Ensifer medicae).